Here is a 554-residue protein sequence, read N- to C-terminus: Thermosome subunit beta (554 aa).

The interval 532 to 554 (GKKSGSEPSGKKEKDKEEKSSED) is disordered. A compositionally biased stretch (basic and acidic residues) spans 540-554 (SGKKEKDKEEKSSED).

Belongs to the TCP-1 chaperonin family. As to quaternary structure, forms a Heterooligomeric complex of two stacked eight-membered rings.

In terms of biological role, molecular chaperone; binds unfolded polypeptides in vitro, and has a weak ATPase activity. This is Thermosome subunit beta (thsB) from Saccharolobus solfataricus (strain ATCC 35092 / DSM 1617 / JCM 11322 / P2) (Sulfolobus solfataricus).